Consider the following 206-residue polypeptide: Pyridoxine/pyridoxamine 5'-phosphate oxidase (206 aa).

FMN-binding positions include 53–58, 68–69, Lys75, and Gln97; these read RMVLLK and YT. A substrate-binding site is contributed by Lys58. Residues Tyr115, Arg119, and Ser123 each coordinate substrate. FMN is bound by residues 132 to 133 and Trp177; that span reads QS. 183 to 185 serves as a coordination point for substrate; the sequence is RLH. Arg187 is an FMN binding site.

It belongs to the pyridoxamine 5'-phosphate oxidase family. Homodimer. It depends on FMN as a cofactor.

It catalyses the reaction pyridoxamine 5'-phosphate + O2 + H2O = pyridoxal 5'-phosphate + H2O2 + NH4(+). It carries out the reaction pyridoxine 5'-phosphate + O2 = pyridoxal 5'-phosphate + H2O2. It participates in cofactor metabolism; pyridoxal 5'-phosphate salvage; pyridoxal 5'-phosphate from pyridoxamine 5'-phosphate: step 1/1. It functions in the pathway cofactor metabolism; pyridoxal 5'-phosphate salvage; pyridoxal 5'-phosphate from pyridoxine 5'-phosphate: step 1/1. Catalyzes the oxidation of either pyridoxine 5'-phosphate (PNP) or pyridoxamine 5'-phosphate (PMP) into pyridoxal 5'-phosphate (PLP). The chain is Pyridoxine/pyridoxamine 5'-phosphate oxidase from Rhizobium meliloti (strain 1021) (Ensifer meliloti).